Reading from the N-terminus, the 319-residue chain is ATP-dependent 6-phosphofructokinase (319 aa).

Residue glycine 11 coordinates ATP. 21–25 (RAVVR) is an ADP binding site. ATP is bound by residues 72–73 (RC) and 102–105 (GEGS). Glutamate 103 contacts Mg(2+). Position 126–128 (126–128 (TID)) interacts with substrate. Catalysis depends on aspartate 128, which acts as the Proton acceptor. Lysine 155 is an ADP binding site. Substrate-binding positions include arginine 163 and 170–172 (MGR). ADP is bound by residues 186–188 (GAE), arginine 212, and 214–216 (KIN). Residues glutamate 223, arginine 244, and 250-253 (HVQR) each bind substrate.

It belongs to the phosphofructokinase type A (PFKA) family. ATP-dependent PFK group I subfamily. Prokaryotic clade 'B1' sub-subfamily. In terms of assembly, homotetramer. The cofactor is Mg(2+).

It is found in the cytoplasm. It catalyses the reaction beta-D-fructose 6-phosphate + ATP = beta-D-fructose 1,6-bisphosphate + ADP + H(+). Its pathway is carbohydrate degradation; glycolysis; D-glyceraldehyde 3-phosphate and glycerone phosphate from D-glucose: step 3/4. Allosterically activated by ADP and other diphosphonucleosides, and allosterically inhibited by phosphoenolpyruvate. Its function is as follows. Catalyzes the phosphorylation of D-fructose 6-phosphate to fructose 1,6-bisphosphate by ATP, the first committing step of glycolysis. The chain is ATP-dependent 6-phosphofructokinase from Thermotoga neapolitana (strain ATCC 49049 / DSM 4359 / NBRC 107923 / NS-E).